The primary structure comprises 185 residues: Crossover junction endodeoxyribonuclease RuvC (185 aa).

Active-site residues include D7, E66, and D137. Mg(2+) is bound by residues D7, E66, and D137.

Belongs to the RuvC family. As to quaternary structure, homodimer which binds Holliday junction (HJ) DNA. The HJ becomes 2-fold symmetrical on binding to RuvC with unstacked arms; it has a different conformation from HJ DNA in complex with RuvA. In the full resolvosome a probable DNA-RuvA(4)-RuvB(12)-RuvC(2) complex forms which resolves the HJ. The cofactor is Mg(2+).

The protein resides in the cytoplasm. It catalyses the reaction Endonucleolytic cleavage at a junction such as a reciprocal single-stranded crossover between two homologous DNA duplexes (Holliday junction).. Functionally, the RuvA-RuvB-RuvC complex processes Holliday junction (HJ) DNA during genetic recombination and DNA repair. Endonuclease that resolves HJ intermediates. Cleaves cruciform DNA by making single-stranded nicks across the HJ at symmetrical positions within the homologous arms, yielding a 5'-phosphate and a 3'-hydroxyl group; requires a central core of homology in the junction. The consensus cleavage sequence is 5'-(A/T)TT(C/G)-3'. Cleavage occurs on the 3'-side of the TT dinucleotide at the point of strand exchange. HJ branch migration catalyzed by RuvA-RuvB allows RuvC to scan DNA until it finds its consensus sequence, where it cleaves and resolves the cruciform DNA. This is Crossover junction endodeoxyribonuclease RuvC from Anaeromyxobacter dehalogenans (strain 2CP-C).